Here is a 278-residue protein sequence, read N- to C-terminus: MNSAGPKCVTLITGANTGLGFETAKALFARPEPYHILVGCRGQISRAEDAIEELQHLFPGTASTAQPLLIDISSDKSIALAFAEVQEEFGYLDIVVNNAGADLDTAVSSGRLTKREAWNQTWDVNVTGTQLFTETFAPLLLASKTQLPRLIFITSGLSSITEHANGSSPRYALAPAGWPKPDTLFLAYRSSKSGLNMIAAEWARVLRNDGVKVFNISPGFLDTGLGDDRASAERREKRALGAIDASVGGEFCANVVEGKLDEQSWPSKALRKNTVQPW.

Residues Leu19, Asp71, and Asn98 each coordinate NADP(+). Ser155 functions as the Proton donor in the catalytic mechanism. 3 residues coordinate NADP(+): Tyr188, Lys192, and Thr223. The active-site Proton acceptor is Tyr188. Lys192 acts as the Lowers pKa of active site Tyr in catalysis.

This sequence belongs to the short-chain dehydrogenases/reductases (SDR) family.

It participates in secondary metabolite biosynthesis; terpenoid biosynthesis. Its function is as follows. Short-chain dehydrogenase/reductase; part of the gene cluster that mediates the biosynthesis of eupenifeldin, a bistropolone meroterpenoid that acts as an antitumor agent. The first step of eupenifeldin biosynthesis is the biosynthesis of 3-methylorcinaldehyde performed by the non-reducing polyketide synthase eupA. Oxidative dearomatization of 3-methylorcinaldehyde likely catalyzed by the FAD-dependent monooxygenase eupB is followed by oxidative ring expansion by the 2-oxoglutarate-dependent dioxygenase eupC to provide the first tropolone metabolite, tropolone stipitaldehyde. In parallel, generation of sesquiterpene alpha-humulene from farnesylpyrophosphate (FPP) is catalyzed by the terpene cyclase eupE. The cytochrome P450 monooxygenase eupD then hydroxylates humulene to humulenol. The putative Diels-Alderase eupF probably catalyzes the formation of the tropolone-humulene skeleton by linking humulenol and the polyketide moiety. The short-chain dehydrogenase/reductase eupG and the flavin-dependent monooxygenase eupH are also essential for eupenifeldin biosynthesis and are likely the additional decorating enzymes of the tropolone-humulene skeleton to produce final eupenifeldin or derivatives. This Phoma sp protein is Short-chain dehydrogenase/reductase eupG.